The following is a 72-amino-acid chain: Translation initiation factor IF-1 (72 aa).

The region spanning 1–72 is the S1-like domain; the sequence is MAKDDVIEVE…TRGRITYRYK (72 aa). Y60 carries the post-translational modification Phosphotyrosine.

This sequence belongs to the IF-1 family. Component of the 30S ribosomal translation pre-initiation complex which assembles on the 30S ribosome in the order IF-2 and IF-3, IF-1 and N-formylmethionyl-tRNA(fMet); mRNA recruitment can occur at any time during PIC assembly.

The protein localises to the cytoplasm. In terms of biological role, one of the essential components for the initiation of protein synthesis. Stabilizes the binding of IF-2 and IF-3 on the 30S subunit to which N-formylmethionyl-tRNA(fMet) subsequently binds. Helps modulate mRNA selection, yielding the 30S pre-initiation complex (PIC). Upon addition of the 50S ribosomal subunit IF-1, IF-2 and IF-3 are released leaving the mature 70S translation initiation complex. This chain is Translation initiation factor IF-1, found in Oceanobacillus iheyensis (strain DSM 14371 / CIP 107618 / JCM 11309 / KCTC 3954 / HTE831).